Here is an 889-residue protein sequence, read N- to C-terminus: DNA mismatch repair protein MutS (889 aa).

Position 641-648 (641-648 (GPNMAGKS)) interacts with ATP.

Belongs to the DNA mismatch repair MutS family.

Functionally, this protein is involved in the repair of mismatches in DNA. It is possible that it carries out the mismatch recognition step. This protein has a weak ATPase activity. This is DNA mismatch repair protein MutS from Orientia tsutsugamushi (strain Ikeda) (Rickettsia tsutsugamushi).